Here is a 318-residue protein sequence, read N- to C-terminus: Trans-prenyltransferase (318 aa).

Residues 1–21 form a helical membrane-spanning segment; that stretch reads MLHLIYISIIVVLIIILISYT. Isopentenyl diphosphate contacts are provided by Lys-85, Arg-88, and His-122. Mg(2+) is bound by residues Asp-129 and Asp-135. Residue Arg-140 participates in dimethylallyl diphosphate binding. Position 141 (Arg-141) interacts with isopentenyl diphosphate. Positions 216, 217, and 254 each coordinate dimethylallyl diphosphate.

It belongs to the FPP/GGPP synthase family. Asfivirus trans-prenyltransferase subfamily. It depends on Mg(2+) as a cofactor.

The protein resides in the host endoplasmic reticulum. The protein localises to the host membrane. It catalyses the reaction isopentenyl diphosphate + dimethylallyl diphosphate = (2E)-geranyl diphosphate + diphosphate. It carries out the reaction isopentenyl diphosphate + (2E)-geranyl diphosphate = (2E,6E)-farnesyl diphosphate + diphosphate. The enzyme catalyses isopentenyl diphosphate + (2E,6E)-farnesyl diphosphate = (2E,6E,10E)-geranylgeranyl diphosphate + diphosphate. The catalysed reaction is isopentenyl diphosphate + (2E,6E,10E)-geranylgeranyl diphosphate = (2E,6E,10E,14E)-geranylfarnesyl diphosphate + diphosphate. It participates in isoprenoid biosynthesis; farnesyl diphosphate biosynthesis; farnesyl diphosphate from geranyl diphosphate and isopentenyl diphosphate: step 1/1. The protein operates within isoprenoid biosynthesis; geranyl diphosphate biosynthesis; geranyl diphosphate from dimethylallyl diphosphate and isopentenyl diphosphate: step 1/1. It functions in the pathway isoprenoid biosynthesis; geranylgeranyl diphosphate biosynthesis; geranylgeranyl diphosphate from farnesyl diphosphate and isopentenyl diphosphate: step 1/1. Functionally, trans-prenyltransferase that catalyzes the sequential condensation of isopentenyl diphosphate (IPP) with different allylic diphosphates, such as dimethylallyl diphosphate (DMAPP), geranyl diphosphate (GPP), farnesyl diphosphate (FPP) and geranylgeranyl diphosphate (GGPP), farnesyl diphosphate being the best allylic substrate. The sequence is that of Trans-prenyltransferase from African swine fever virus (isolate Warthog/Namibia/Wart80/1980) (ASFV).